The primary structure comprises 844 residues: RING finger containing E3 ubiquitin-protein ligase WSV222 (844 aa).

A229–T236 contributes to the ATP binding site. The segment at C308 to R359 adopts an RING-type; atypical zinc-finger fold.

Interacts with host UBE2E1/UBCH6; this interaction results in WSV222 auto-ubiquitination. Interacts with host tumor suppressor-like protein.

The catalysed reaction is S-ubiquitinyl-[E2 ubiquitin-conjugating enzyme]-L-cysteine + [acceptor protein]-L-lysine = [E2 ubiquitin-conjugating enzyme]-L-cysteine + N(6)-ubiquitinyl-[acceptor protein]-L-lysine.. It participates in protein modification; protein ubiquitination. Probable E3 ubiquitin-protein ligase which accepts ubiquitin from the E2 ubiquitin-conjugating enzyme UBE2E1/UBCH6 in the form of a thioester and then directly transfers the ubiquitin to targeted substrates. Mediates ubiquitination of host tumor-suppressor-like protein (TSL) targeting it for degradation. Might function as an anti-apoptosis protein by counteracting TSL-induced apoptosis. The polypeptide is RING finger containing E3 ubiquitin-protein ligase WSV222 (White spot syndrome virus (isolate Shrimp/China/Tongan/1996) (WSSV)).